Here is a 548-residue protein sequence, read N- to C-terminus: Solute carrier family 22 member 7 (548 aa).

Residues 21 to 41 (VALLALPRVLLPLHFLLPIFL) traverse the membrane as a helical segment. Asn91 is a glycosylation site (N-linked (GlcNAc...) asparagine). 11 helical membrane passes run 146-166 (AAST…GYLS), 180-200 (VSTL…MFAI), 204-224 (LTGS…LEWL), 234-254 (VLSS…GYLI), 259-279 (WLLL…WWVP), 346-366 (ISLC…GLSL), 376-397 (YQTQ…YLSV), 404-423 (LTQA…RLLV), 432-452 (TVLA…AYLF), 466-486 (MGLT…AALL), and 493-513 (LPKL…LLLP). The active-site Important for glutamate counteranion efflux is Phe441. Residues 522 to 548 (ETIQDVERKSAPTSLQEEEMPMKQVQN) form a disordered region.

This sequence belongs to the major facilitator (TC 2.A.1) superfamily. Organic cation transporter (TC 2.A.1.19) family. As to expression, mainly expressed in liver and kidney. In kidney, expressed in proximal tubular cells. Also expressed in pancreas, small intestine, spinal cord, lung, brain and heart. Expressed in fetal liver.

The protein localises to the basolateral cell membrane. The protein resides in the apical cell membrane. It is found in the cell membrane. Its subcellular location is the cytoplasm. It localises to the cytosol. The catalysed reaction is orotate(out) + L-glutamate(in) = orotate(in) + L-glutamate(out). The enzyme catalyses 3',5'-cyclic GMP(in) = 3',5'-cyclic GMP(out). It carries out the reaction GMP(in) = GMP(out). It catalyses the reaction 2'-deoxyguanosine(in) = 2'-deoxyguanosine(out). The catalysed reaction is GDP(in) = GDP(out). The enzyme catalyses guanosine(in) = guanosine(out). It carries out the reaction GTP(in) = GTP(out). It catalyses the reaction 3',5'-cyclic AMP(in) = 3',5'-cyclic AMP(out). The catalysed reaction is creatinine(in) = creatinine(out). The enzyme catalyses prostaglandin E2(out) = prostaglandin E2(in). It carries out the reaction 2-oxoglutarate(in) = 2-oxoglutarate(out). It catalyses the reaction glutarate(in) = glutarate(out). The catalysed reaction is urate(out) = urate(in). The enzyme catalyses estrone 3-sulfate(out) = estrone 3-sulfate(in). It carries out the reaction prostaglandin F2alpha(out) = prostaglandin F2alpha(in). Its function is as follows. Functions as a Na(+)-independent bidirectional multispecific transporter. Contributes to the renal and hepatic elimination of endogenous organic compounds from the systemic circulation into the urine and bile, respectively. Capable of transporting a wide range of purine and pyrimidine nucleobases, nucleosides and nucleotides, with cGMP, 2'deoxyguanosine and GMP being the preferred substrates. Functions as a pH- and chloride-independent cGMP bidirectional facilitative transporter that can regulate both intracellular and extracellular levels of cGMP and may be involved in cGMP signaling pathways. Mediates orotate/glutamate bidirectional exchange and most likely display a physiological role in hepatic release of glutamate into the blood. Involved in renal secretion and possible reabsorption of creatinine. Able to uptake prostaglandin E2 (PGE2) and may contribute to PGE2 renal excretion. Also transports alpha-ketoglutarate and urate. Apart from the orotate/glutamate exchange, the counterions for the uptake of other SLC22A7/OAT2 substrates remain to be identified. Functionally, non functional transporter. In terms of biological role, involved in the uptake of prostaglandin F2-alpha (PGF2-alpha). This Homo sapiens (Human) protein is Solute carrier family 22 member 7.